Here is an 833-residue protein sequence, read N- to C-terminus: Protein translocase subunit SecA (833 aa).

ATP is bound by residues glutamine 87, 105 to 109 (GEGKT), and aspartate 494. The disordered stretch occupies residues 789 to 816 (PAAVAYSGGEAEAGPAQPHREDPKVGRN). A compositionally biased stretch (basic and acidic residues) spans 806 to 815 (PHREDPKVGR). Zn(2+) is bound by residues cysteine 819, cysteine 821, cysteine 830, and cysteine 831.

This sequence belongs to the SecA family. In terms of assembly, monomer and homodimer. Part of the essential Sec protein translocation apparatus which comprises SecA, SecYEG and auxiliary proteins SecDF-YajC and YidC. It depends on Zn(2+) as a cofactor.

Its subcellular location is the cell inner membrane. The protein resides in the cytoplasm. It catalyses the reaction ATP + H2O + cellular proteinSide 1 = ADP + phosphate + cellular proteinSide 2.. In terms of biological role, part of the Sec protein translocase complex. Interacts with the SecYEG preprotein conducting channel. Has a central role in coupling the hydrolysis of ATP to the transfer of proteins into and across the cell membrane, serving as an ATP-driven molecular motor driving the stepwise translocation of polypeptide chains across the membrane. This Nitratidesulfovibrio vulgaris (strain DP4) (Desulfovibrio vulgaris) protein is Protein translocase subunit SecA.